The following is a 176-amino-acid chain: Large ribosomal subunit protein eL20 (176 aa).

Belongs to the eukaryotic ribosomal protein eL20 family. As to quaternary structure, component of the large ribosomal subunit.

It localises to the cytoplasm. Component of the large ribosomal subunit. The ribosome is a large ribonucleoprotein complex responsible for the synthesis of proteins in the cell. The protein is Large ribosomal subunit protein eL20 (rpl18a) of Ictalurus punctatus (Channel catfish).